Consider the following 278-residue polypeptide: Large ribosomal subunit protein uL2 (278 aa).

2 stretches are compositionally biased toward basic residues: residues 210–220 (GRMRWKGKRPS) and 257–278 (TRRK…NKKR). The segment at 210 to 278 (GRMRWKGKRP…VRRRKSNKKR (69 aa)) is disordered.

It belongs to the universal ribosomal protein uL2 family. As to quaternary structure, part of the 50S ribosomal subunit. Forms a bridge to the 30S subunit in the 70S ribosome.

Its function is as follows. One of the primary rRNA binding proteins. Required for association of the 30S and 50S subunits to form the 70S ribosome, for tRNA binding and peptide bond formation. It has been suggested to have peptidyltransferase activity; this is somewhat controversial. Makes several contacts with the 16S rRNA in the 70S ribosome. The protein is Large ribosomal subunit protein uL2 of Acidothermus cellulolyticus (strain ATCC 43068 / DSM 8971 / 11B).